Here is a 324-residue protein sequence, read N- to C-terminus: uncharacterized protein (324 aa).

Over residues 1–11 (MNTNINVNGSN) the composition is skewed to polar residues. Disordered stretches follow at residues 1-77 (MNTN…YSYS), 132-194 (NNHY…NNNN), and 272-324 (DENI…DNDS). The span at 21–64 (NENNNNNNGRNNNTNNNNNGRYNNNNNNNNNNNNNNYNLNMNST) shows a compositional bias: low complexity. The segment covering 279-324 (SNNNNNNNNNNNNSYNVNICRNNSNFNVNENNGGDNNNDNNNDNDS) has biased composition (low complexity).

This is an uncharacterized protein from Dictyostelium discoideum (Social amoeba).